Consider the following 316-residue polypeptide: MRVLLAPMEGVLDSLVRELLTEVNDYDLCITEFVRVVDQLLPVKVFHRICPELQNASRTPSGTLVRVQLLGQFPQWLAENAARAVELGSWGVDLNCGCPSKTVNGSGGGATLLKDPELIYQGAKAMREAVPAHLPVSVKVRLGWDSGEKKFEIADAVQQAGATELVVHGRTKEQGYRAEHIDWQAIGEIRQRLNIPVIANGEIWDWQSAQECMAISGCDSVMIGRGALNIPNLSRVVKYNEPRMPWPEVVALLQKYTRLEKQSDTGLYHVARIKQWLSYLRKEYDEATELFQHVRVLNNSPDIARAIQAIDIGKLR.

FMN-binding positions include 7-9 and Q68; that span reads PME. Residue C98 is the Proton donor of the active site. Residues K139, 200 to 202, and 224 to 225 each bind FMN; these read NGE and GR.

This sequence belongs to the Dus family. DusC subfamily. It depends on FMN as a cofactor.

It carries out the reaction 5,6-dihydrouridine(16) in tRNA + NADP(+) = uridine(16) in tRNA + NADPH + H(+). The enzyme catalyses 5,6-dihydrouridine(16) in tRNA + NAD(+) = uridine(16) in tRNA + NADH + H(+). Functionally, catalyzes the synthesis of 5,6-dihydrouridine (D), a modified base found in the D-loop of most tRNAs, via the reduction of the C5-C6 double bond in target uridines. Specifically modifies U16 in tRNAs. In Escherichia coli O157:H7, this protein is tRNA-dihydrouridine(16) synthase.